We begin with the raw amino-acid sequence, 445 residues long: Protein kinase C and casein kinase substrate in neurons protein 1 (445 aa).

The F-BAR domain maps to 12 to 282 (DETTDSFWEV…TIVSASAQED (271 aa)). Coiled-coil stretches lie at residues 146-167 (AKKLKELETAKKTYHMACKEEK) and 183-219 (TTDQQKKLQEKVDKCKNDVQKAKEKYEKSLDELNKCT). Positions 327–390 (LTQVTHGAEH…PFEEDSKGVR (64 aa)) are disordered. Composition is skewed to polar residues over residues 338 to 358 (TPQTGDRGSVSSYEKNQQYSA) and 368 to 379 (TAAQSASETNGG). The 60-residue stretch at 386 to 445 (SKGVRVRALYDYEGQEQDELTFKAGDELTKLEDEDEQGWCKGRLDSGQLGLYPANYVEPV) folds into the SH3 domain.

As to quaternary structure, interacts with cobl.

It is found in the cytoplasm. Its subcellular location is the cytosol. It localises to the cell membrane. The protein localises to the cell projection. The protein resides in the synapse. It is found in the synaptosome. Its subcellular location is the cytoplasmic vesicle membrane. It localises to the ruffle membrane. The protein localises to the membrane. Its function is as follows. Binds to membranes via its F-BAR domain and mediates membrane tubulation. Plays a role in cellular transport processes by recruiting dynamins to membranes. Plays a role in the reorganization of the actin cytoskeleton and in neuron morphogenesis via its interaction with cobl, and by recruiting cobl to the cell cortex. Plays a role in the regulation of neurite formation, neurite branching and the regulation of neurite length. Required for normal synaptic vesicle endocytosis; this process retrieves previously released neurotransmitters to accommodate multiple cycles of neurotransmission. Required for normal excitatory and inhibitory synaptic transmission. Required for normal embryonic development, including normal development of laterality, normal body size and shape, as well as normal brain and heart development. Required for normal development of stereocilia and kinocilia in sensory hair cells of neuromasts in the posterior lateral line organ, and thus also for balance keeping and normal swimming behavior. In Danio rerio (Zebrafish), this protein is Protein kinase C and casein kinase substrate in neurons protein 1 (pacsin1b).